Consider the following 78-residue polypeptide: Conotoxin 6 (78 aa).

The N-terminal stretch at 1-22 is a signal peptide; it reads MKLTCMMIVAVLFLTAWIFITA. A propeptide spanning residues 23–51 is cleaved from the precursor; it reads DNSRNGIENLPRMRRHEMKNPKASKLNKR. 3 disulfide bridges follow: Cys-53/Cys-69, Cys-60/Cys-73, and Cys-68/Cys-77.

It belongs to the conotoxin O1 superfamily. Expressed by the venom duct.

It localises to the secreted. This is Conotoxin 6 from Conus imperialis (Imperial cone).